Here is a 179-residue protein sequence, read N- to C-terminus: Acireductone dioxygenase (179 aa).

Fe(2+) contacts are provided by His100, His102, Glu106, and His145. Ni(2+) contacts are provided by His100, His102, Glu106, and His145.

It belongs to the acireductone dioxygenase (ARD) family. In terms of assembly, monomer. Requires Fe(2+) as cofactor. It depends on Ni(2+) as a cofactor.

It carries out the reaction 1,2-dihydroxy-5-(methylsulfanyl)pent-1-en-3-one + O2 = 3-(methylsulfanyl)propanoate + CO + formate + 2 H(+). The enzyme catalyses 1,2-dihydroxy-5-(methylsulfanyl)pent-1-en-3-one + O2 = 4-methylsulfanyl-2-oxobutanoate + formate + 2 H(+). Its pathway is amino-acid biosynthesis; L-methionine biosynthesis via salvage pathway; L-methionine from S-methyl-5-thio-alpha-D-ribose 1-phosphate: step 5/6. Catalyzes 2 different reactions between oxygen and the acireductone 1,2-dihydroxy-3-keto-5-methylthiopentene (DHK-MTPene) depending upon the metal bound in the active site. Fe-containing acireductone dioxygenase (Fe-ARD) produces formate and 2-keto-4-methylthiobutyrate (KMTB), the alpha-ketoacid precursor of methionine in the methionine recycle pathway. Ni-containing acireductone dioxygenase (Ni-ARD) produces methylthiopropionate, carbon monoxide and formate, and does not lie on the methionine recycle pathway. The protein is Acireductone dioxygenase of Bacillus licheniformis (strain ATCC 14580 / DSM 13 / JCM 2505 / CCUG 7422 / NBRC 12200 / NCIMB 9375 / NCTC 10341 / NRRL NRS-1264 / Gibson 46).